A 290-amino-acid polypeptide reads, in one-letter code: MDYKRFKGKHANIVIEIISLLEKGVKKAQEILEKPDAGSYTQLENSSGDTPIKADLALDKFLEETFLSLENVKSVFSEEKETPVTKENGSYLIAYDPLDGSSVMEANFLVGTIIGVYEKDYKAQNLVASLYVVFGHKIELVVALEEVYRYAFYQNKFHFIETIVLENKGKIIASGGNQKDFSLGLKKALEGFFAENYRLRYSGSMVADVHHVLVKKGGMFSYPQKKLRKLFEVFPLALMVEKAKGEAFYFDKGVKKRLLDQSVESYHEKSECYLASPHEAQILEKHLKGE.

Residues Glu-78, Asp-96, Leu-98, and Asp-99 each coordinate Mg(2+). Substrate-binding positions include 99 to 102 (DGSS), Tyr-201, and Lys-226. Glu-232 contacts Mg(2+).

Belongs to the FBPase class 1 family. As to quaternary structure, homotetramer. The cofactor is Mg(2+).

It localises to the cytoplasm. The enzyme catalyses beta-D-fructose 1,6-bisphosphate + H2O = beta-D-fructose 6-phosphate + phosphate. It participates in carbohydrate biosynthesis; gluconeogenesis. This chain is Fructose-1,6-bisphosphatase class 1, found in Helicobacter pylori (strain J99 / ATCC 700824) (Campylobacter pylori J99).